The sequence spans 122 residues: UPF0344 protein BcerKBAB4_1054 (122 aa).

4 consecutive transmembrane segments (helical) span residues I6–G26, L38–A58, W65–V85, and P92–L112.

The protein belongs to the UPF0344 family.

It localises to the cell membrane. The polypeptide is UPF0344 protein BcerKBAB4_1054 (Bacillus mycoides (strain KBAB4) (Bacillus weihenstephanensis)).